A 328-amino-acid polypeptide reads, in one-letter code: Lipoyl synthase (328 aa).

[4Fe-4S] cluster-binding residues include Cys75, Cys80, Cys86, Cys101, Cys105, Cys108, and Ser315. One can recognise a Radical SAM core domain in the interval 87–304; sequence FNHGTATFMI…EREAKKMGYE (218 aa).

It belongs to the radical SAM superfamily. Lipoyl synthase family. Requires [4Fe-4S] cluster as cofactor.

It localises to the cytoplasm. The enzyme catalyses [[Fe-S] cluster scaffold protein carrying a second [4Fe-4S](2+) cluster] + N(6)-octanoyl-L-lysyl-[protein] + 2 oxidized [2Fe-2S]-[ferredoxin] + 2 S-adenosyl-L-methionine + 4 H(+) = [[Fe-S] cluster scaffold protein] + N(6)-[(R)-dihydrolipoyl]-L-lysyl-[protein] + 4 Fe(3+) + 2 hydrogen sulfide + 2 5'-deoxyadenosine + 2 L-methionine + 2 reduced [2Fe-2S]-[ferredoxin]. It functions in the pathway protein modification; protein lipoylation via endogenous pathway; protein N(6)-(lipoyl)lysine from octanoyl-[acyl-carrier-protein]: step 2/2. Functionally, catalyzes the radical-mediated insertion of two sulfur atoms into the C-6 and C-8 positions of the octanoyl moiety bound to the lipoyl domains of lipoate-dependent enzymes, thereby converting the octanoylated domains into lipoylated derivatives. This chain is Lipoyl synthase, found in Colwellia psychrerythraea (strain 34H / ATCC BAA-681) (Vibrio psychroerythus).